We begin with the raw amino-acid sequence, 442 residues long: uncharacterized protein (442 aa).

Residues Met-1–Ala-23 form the signal peptide. Disordered stretches follow at residues Thr-36–Asp-67 and Ala-91–Arg-115. Over residues Thr-48–Asp-67 the composition is skewed to low complexity. N-linked (GlcNAc...) asparagine glycans are attached at residues Asn-64, Asn-92, Asn-99, Asn-130, Asn-174, Asn-225, Asn-244, Asn-346, Asn-363, Asn-386, and Asn-398.

The protein resides in the secreted. This is an uncharacterized protein from Arthroderma benhamiae (strain ATCC MYA-4681 / CBS 112371) (Trichophyton mentagrophytes).